A 344-amino-acid chain; its full sequence is N-acetyl-gamma-glutamyl-phosphate reductase (344 aa).

Cysteine 150 is an active-site residue.

This sequence belongs to the NAGSA dehydrogenase family. Type 1 subfamily.

The protein resides in the cytoplasm. It catalyses the reaction N-acetyl-L-glutamate 5-semialdehyde + phosphate + NADP(+) = N-acetyl-L-glutamyl 5-phosphate + NADPH + H(+). It functions in the pathway amino-acid biosynthesis; L-arginine biosynthesis; N(2)-acetyl-L-ornithine from L-glutamate: step 3/4. Functionally, catalyzes the NADPH-dependent reduction of N-acetyl-5-glutamyl phosphate to yield N-acetyl-L-glutamate 5-semialdehyde. This chain is N-acetyl-gamma-glutamyl-phosphate reductase, found in Ectopseudomonas mendocina (strain ymp) (Pseudomonas mendocina).